The following is a 251-amino-acid chain: Hydroxyacylglutathione hydrolase (251 aa).

Positions 53, 55, 57, 58, 110, 127, and 165 each coordinate Zn(2+).

Belongs to the metallo-beta-lactamase superfamily. Glyoxalase II family. As to quaternary structure, monomer. Requires Zn(2+) as cofactor.

It catalyses the reaction an S-(2-hydroxyacyl)glutathione + H2O = a 2-hydroxy carboxylate + glutathione + H(+). The protein operates within secondary metabolite metabolism; methylglyoxal degradation; (R)-lactate from methylglyoxal: step 2/2. Functionally, thiolesterase that catalyzes the hydrolysis of S-D-lactoyl-glutathione to form glutathione and D-lactic acid. The sequence is that of Hydroxyacylglutathione hydrolase from Yersinia enterocolitica serotype O:8 / biotype 1B (strain NCTC 13174 / 8081).